The following is a 219-amino-acid chain: Probable transaldolase (219 aa).

Lysine 83 functions as the Schiff-base intermediate with substrate in the catalytic mechanism.

Belongs to the transaldolase family. Type 3B subfamily.

It is found in the cytoplasm. It carries out the reaction D-sedoheptulose 7-phosphate + D-glyceraldehyde 3-phosphate = D-erythrose 4-phosphate + beta-D-fructose 6-phosphate. It participates in carbohydrate degradation; pentose phosphate pathway; D-glyceraldehyde 3-phosphate and beta-D-fructose 6-phosphate from D-ribose 5-phosphate and D-xylulose 5-phosphate (non-oxidative stage): step 2/3. Its function is as follows. Transaldolase is important for the balance of metabolites in the pentose-phosphate pathway. In Cereibacter sphaeroides (strain ATCC 17025 / ATH 2.4.3) (Rhodobacter sphaeroides), this protein is Probable transaldolase.